We begin with the raw amino-acid sequence, 376 residues long: uncharacterized protein (376 aa).

Belongs to the mimivirus R1 family.

This is an uncharacterized protein from Acanthamoeba polyphaga mimivirus (APMV).